Consider the following 299-residue polypeptide: Caspase-1 (299 aa).

A propeptide spanning residues M1–D28 is cleaved from the precursor. The interval M1–P45 is disordered. Residues H136 and C178 contribute to the active site. Positions G185 to D195 are excised as a propeptide.

It belongs to the peptidase C14A family. As to quaternary structure, heterotetramer that consists of two anti-parallel arranged heterodimers, each one formed by a 19/18 kDa (p19/18) and a 12 kDa (p12) subunit. Post-translationally, the two subunits are derived from the precursor sequence by an autocatalytic mechanism.

Functionally, involved in the activation cascade of caspases responsible for apoptosis execution. Inhibited by the baculovirus anti-apoptotic protein p35. Cleaves p35 and nuclear immunophilin FKBP46. This Spodoptera frugiperda (Fall armyworm) protein is Caspase-1.